A 307-amino-acid chain; its full sequence is Ribosomal RNA small subunit methyltransferase H (307 aa).

S-adenosyl-L-methionine-binding positions include 34–36 (GGH), aspartate 54, phenylalanine 79, aspartate 101, and glutamine 108.

This sequence belongs to the methyltransferase superfamily. RsmH family.

The protein localises to the cytoplasm. The enzyme catalyses cytidine(1402) in 16S rRNA + S-adenosyl-L-methionine = N(4)-methylcytidine(1402) in 16S rRNA + S-adenosyl-L-homocysteine + H(+). In terms of biological role, specifically methylates the N4 position of cytidine in position 1402 (C1402) of 16S rRNA. This Ruthia magnifica subsp. Calyptogena magnifica protein is Ribosomal RNA small subunit methyltransferase H.